A 168-amino-acid polypeptide reads, in one-letter code: MKRKLKMDNLNINFINDDEHPIPSQDLLLKCLQLVADKHHISHAEVNLNIVSNDEIQQINKQFRNKDKPTNIISFEFEKPQGLPDDIANDFLGDIVIAPAVLENEAKEQNKEINDHWQHIFIHGLLHLLGYDHQDDQEAEVMENLEIQLLAQLGIANPYIEQENQNGR.

Zn(2+)-binding residues include His123, His127, and His133.

Belongs to the endoribonuclease YbeY family. It depends on Zn(2+) as a cofactor.

It is found in the cytoplasm. Single strand-specific metallo-endoribonuclease involved in late-stage 70S ribosome quality control and in maturation of the 3' terminus of the 16S rRNA. The polypeptide is Endoribonuclease YbeY (Francisella tularensis subsp. holarctica (strain LVS)).